The chain runs to 750 residues: Glycerophosphodiester phosphodiesterase GDPDL7 (750 aa).

The N-terminal stretch at 1–17 is a signal peptide; the sequence is MLRFIIFFSLFIHLCVA. 2 GP-PDE domains span residues 41 to 339 and 355 to 654; these read PAVV…SQSI and ALVI…TRYL. 4 N-linked (GlcNAc...) asparagine glycosylation sites follow: asparagine 134, asparagine 304, asparagine 603, and asparagine 716.

This sequence belongs to the glycerophosphoryl diester phosphodiesterase family. In terms of tissue distribution, expressed in flowers and siliques.

It carries out the reaction a sn-glycero-3-phosphodiester + H2O = an alcohol + sn-glycerol 3-phosphate + H(+). This is Glycerophosphodiester phosphodiesterase GDPDL7 from Arabidopsis thaliana (Mouse-ear cress).